The chain runs to 180 residues: NADH-quinone oxidoreductase subunit I (180 aa).

4Fe-4S ferredoxin-type domains follow at residues 50 to 80 (LTRD…LQKA) and 90 to 119 (EFFR…LTPD). [4Fe-4S] cluster contacts are provided by C60, C63, C66, C70, C99, C102, C105, and C109.

This sequence belongs to the complex I 23 kDa subunit family. As to quaternary structure, NDH-1 is composed of 13 different subunits. Subunits NuoA, H, J, K, L, M, N constitute the membrane sector of the complex. Requires [4Fe-4S] cluster as cofactor.

It is found in the cell inner membrane. The catalysed reaction is a quinone + NADH + 5 H(+)(in) = a quinol + NAD(+) + 4 H(+)(out). NDH-1 shuttles electrons from NADH, via FMN and iron-sulfur (Fe-S) centers, to quinones in the respiratory chain. The immediate electron acceptor for the enzyme in this species is believed to be ubiquinone. Couples the redox reaction to proton translocation (for every two electrons transferred, four hydrogen ions are translocated across the cytoplasmic membrane), and thus conserves the redox energy in a proton gradient. The chain is NADH-quinone oxidoreductase subunit I from Yersinia enterocolitica serotype O:8 / biotype 1B (strain NCTC 13174 / 8081).